A 371-amino-acid chain; its full sequence is Aspartate-semialdehyde dehydrogenase (371 aa).

Residues Arg-11 to Val-14, Thr-38 to Ser-39, and Gln-75 each bind NADP(+). Arg-104 provides a ligand contact to phosphate. The active-site Acyl-thioester intermediate is the Cys-137. Residue Gln-164 participates in substrate binding. Position 167–168 (Ser-167–Gly-168) interacts with NADP(+). Glu-243 lines the substrate pocket. Lys-246 contacts phosphate. Arg-269 is a substrate binding site. The Proton acceptor role is filled by His-276. Gln-352 is an NADP(+) binding site.

Belongs to the aspartate-semialdehyde dehydrogenase family. In terms of assembly, homodimer.

It catalyses the reaction L-aspartate 4-semialdehyde + phosphate + NADP(+) = 4-phospho-L-aspartate + NADPH + H(+). It participates in amino-acid biosynthesis; L-lysine biosynthesis via DAP pathway; (S)-tetrahydrodipicolinate from L-aspartate: step 2/4. It functions in the pathway amino-acid biosynthesis; L-methionine biosynthesis via de novo pathway; L-homoserine from L-aspartate: step 2/3. Its pathway is amino-acid biosynthesis; L-threonine biosynthesis; L-threonine from L-aspartate: step 2/5. Functionally, catalyzes the NADPH-dependent formation of L-aspartate-semialdehyde (L-ASA) by the reductive dephosphorylation of L-aspartyl-4-phosphate. The sequence is that of Aspartate-semialdehyde dehydrogenase from Buchnera aphidicola subsp. Acyrthosiphon pisum (strain APS) (Acyrthosiphon pisum symbiotic bacterium).